Here is a 550-residue protein sequence, read N- to C-terminus: Thermosome subunit (550 aa).

The interval 529 to 550 (KEKEGEKGGGGSEDFSSSSDLD) is disordered. Over residues 541-550 (EDFSSSSDLD) the composition is skewed to low complexity.

It belongs to the TCP-1 chaperonin family. As to quaternary structure, forms an oligomeric complex of eight-membered rings.

Molecular chaperone; binds unfolded polypeptides in vitro, and has a weak ATPase activity. In Pyrococcus abyssi (strain GE5 / Orsay), this protein is Thermosome subunit (ths).